We begin with the raw amino-acid sequence, 726 residues long: Catalase-peroxidase (726 aa).

The segment at 1–33 is disordered; the sequence is MSTTDDTHNTLSTGKCPFHQGGHDRSAGAGTAS. A cross-link (tryptophyl-tyrosyl-methioninium (Trp-Tyr) (with M-252)) is located at residues 105–226; that stretch reads WHGAGTYRSI…LGATEMGLIY (122 aa). The Proton acceptor role is filled by His106. Positions 226 to 252 form a cross-link, tryptophyl-tyrosyl-methioninium (Tyr-Met) (with W-105); the sequence is YVNPEGPDHSGEPLSAAAAIRATFGNM. Position 267 (His267) interacts with heme b.

The protein belongs to the peroxidase family. Peroxidase/catalase subfamily. In terms of assembly, homodimer or homotetramer. Heme b serves as cofactor. Formation of the three residue Trp-Tyr-Met cross-link is important for the catalase, but not the peroxidase activity of the enzyme.

It carries out the reaction H2O2 + AH2 = A + 2 H2O. It catalyses the reaction 2 H2O2 = O2 + 2 H2O. Functionally, bifunctional enzyme with both catalase and broad-spectrum peroxidase activity. This is Catalase-peroxidase from Salmonella heidelberg (strain SL476).